The following is a 450-amino-acid chain: 3-phosphoshikimate 1-carboxyvinyltransferase (450 aa).

Lysine 23, serine 24, and arginine 28 together coordinate 3-phosphoshikimate. Lysine 23 lines the phosphoenolpyruvate pocket. Glycine 96 and arginine 124 together coordinate phosphoenolpyruvate. 6 residues coordinate 3-phosphoshikimate: serine 167, serine 168, glutamine 169, serine 196, glutamate 311, and histidine 340. Glutamine 169 is a binding site for phosphoenolpyruvate. Catalysis depends on glutamate 311, which acts as the Proton acceptor. Residues arginine 344, arginine 385, and lysine 410 each contribute to the phosphoenolpyruvate site. Positions 426 to 450 (GQGWGYPQPRSGQRARRATGQGSGG) are disordered.

It belongs to the EPSP synthase family. As to quaternary structure, monomer.

The protein localises to the cytoplasm. It catalyses the reaction 3-phosphoshikimate + phosphoenolpyruvate = 5-O-(1-carboxyvinyl)-3-phosphoshikimate + phosphate. Its pathway is metabolic intermediate biosynthesis; chorismate biosynthesis; chorismate from D-erythrose 4-phosphate and phosphoenolpyruvate: step 6/7. Its function is as follows. Catalyzes the transfer of the enolpyruvyl moiety of phosphoenolpyruvate (PEP) to the 5-hydroxyl of shikimate-3-phosphate (S3P) to produce enolpyruvyl shikimate-3-phosphate and inorganic phosphate. This chain is 3-phosphoshikimate 1-carboxyvinyltransferase, found in Mycobacterium tuberculosis (strain ATCC 25177 / H37Ra).